Reading from the N-terminus, the 196-residue chain is Probable GTP-binding protein EngB (196 aa).

An EngB-type G domain is found at 22-194 (DKKEIAFAGR…LKTIGEILGD (173 aa)). Residues 30-37 (GRSNVGKS), 56-60 (GKTRS), 74-77 (DLPG), 141-144 (TKSD), and 173-175 (FSS) contribute to the GTP site. Residues S37 and T58 each coordinate Mg(2+).

Belongs to the TRAFAC class TrmE-Era-EngA-EngB-Septin-like GTPase superfamily. EngB GTPase family. It depends on Mg(2+) as a cofactor.

Functionally, necessary for normal cell division and for the maintenance of normal septation. In Petrotoga mobilis (strain DSM 10674 / SJ95), this protein is Probable GTP-binding protein EngB.